A 508-amino-acid polypeptide reads, in one-letter code: Glycogen synthase (508 aa).

K15 contacts ADP-alpha-D-glucose. The tract at residues 483–508 is disordered; that stretch reads ARNRAETRPQTASALSYREPRPAAEY.

It belongs to the glycosyltransferase 1 family. Bacterial/plant glycogen synthase subfamily.

It catalyses the reaction [(1-&gt;4)-alpha-D-glucosyl](n) + ADP-alpha-D-glucose = [(1-&gt;4)-alpha-D-glucosyl](n+1) + ADP + H(+). It functions in the pathway glycan biosynthesis; glycogen biosynthesis. In terms of biological role, synthesizes alpha-1,4-glucan chains using ADP-glucose. The polypeptide is Glycogen synthase (Paracidovorax citrulli (strain AAC00-1) (Acidovorax citrulli)).